A 236-amino-acid chain; its full sequence is (5-formylfuran-3-yl)methyl phosphate synthase (236 aa).

The active-site Schiff-base intermediate with substrate is the K27. The active-site Proton acceptor is the K85.

Belongs to the MfnB family.

The catalysed reaction is 2 D-glyceraldehyde 3-phosphate = 4-(hydroxymethyl)-2-furancarboxaldehyde phosphate + phosphate + 2 H2O. Its pathway is cofactor biosynthesis; methanofuran biosynthesis. In terms of biological role, catalyzes the formation of 4-(hydroxymethyl)-2-furancarboxaldehyde phosphate (4-HFC-P) from two molecules of glyceraldehyde-3-P (GA-3-P). The polypeptide is (5-formylfuran-3-yl)methyl phosphate synthase (Methanothermobacter thermautotrophicus (strain ATCC 29096 / DSM 1053 / JCM 10044 / NBRC 100330 / Delta H) (Methanobacterium thermoautotrophicum)).